A 196-amino-acid polypeptide reads, in one-letter code: Holliday junction branch migration complex subunit RuvA (196 aa).

A domain I region spans residues 1–65 (MIGYLRGKII…EDALQLFGFH (65 aa)). The tract at residues 66-140 (DKEEKNLFLS…GKLVSIEEGG (75 aa)) is domain II. The interval 140 to 144 (GVVAK) is flexible linker. The segment at 145-196 (AKSVAHTQITSALLNLGYKSQLVDQFVSSLPADIAVEDGIRKGFQTLSGGLS) is domain III.

It belongs to the RuvA family. In terms of assembly, homotetramer. Forms an RuvA(8)-RuvB(12)-Holliday junction (HJ) complex. HJ DNA is sandwiched between 2 RuvA tetramers; dsDNA enters through RuvA and exits via RuvB. An RuvB hexamer assembles on each DNA strand where it exits the tetramer. Each RuvB hexamer is contacted by two RuvA subunits (via domain III) on 2 adjacent RuvB subunits; this complex drives branch migration. In the full resolvosome a probable DNA-RuvA(4)-RuvB(12)-RuvC(2) complex forms which resolves the HJ.

The protein resides in the cytoplasm. Its function is as follows. The RuvA-RuvB-RuvC complex processes Holliday junction (HJ) DNA during genetic recombination and DNA repair, while the RuvA-RuvB complex plays an important role in the rescue of blocked DNA replication forks via replication fork reversal (RFR). RuvA specifically binds to HJ cruciform DNA, conferring on it an open structure. The RuvB hexamer acts as an ATP-dependent pump, pulling dsDNA into and through the RuvAB complex. HJ branch migration allows RuvC to scan DNA until it finds its consensus sequence, where it cleaves and resolves the cruciform DNA. The polypeptide is Holliday junction branch migration complex subunit RuvA (Bdellovibrio bacteriovorus (strain ATCC 15356 / DSM 50701 / NCIMB 9529 / HD100)).